Here is a 399-residue protein sequence, read N- to C-terminus: MYLEHLSLTDFRSYAQVDLKLGPGVTVLVGSNGIGKTNLMEAIGYLATLSSHRVSTDAPLLRFGTERALIRAKLVRGEQSTVIELEINAGRANRGRINRSNPVRARDILGICQTVLFAPEDLALVKGDPSNRRRFLDELLVSLVPRHAATRSDYDRVLKQRNALLKSARTGKFTAGHEATLDVWDQHMARAGAELLHARLELVERLRPHLNSAYAQLTDASKDAGAVYRSTIQGVLDDDGGPTDHGTEPSPSVDDLRLLSVDELTERYVQAFAASRKKELERGISLVGPHRDELELVLGQAPAKGYASHGETWSMCLSLRLASYYVMLDDARTGGTAPILILILDDVFAELDVHRRRKLAAIVAGAEQVLVTAAVDADIPEELAGRRVTVVPGGIDGEG.

Residue 30–37 coordinates ATP; it reads GSNGIGKT.

It belongs to the RecF family.

The protein resides in the cytoplasm. The RecF protein is involved in DNA metabolism; it is required for DNA replication and normal SOS inducibility. RecF binds preferentially to single-stranded, linear DNA. It also seems to bind ATP. This is DNA replication and repair protein RecF from Paenarthrobacter aurescens (strain TC1).